The sequence spans 300 residues: Sulfate adenylyltransferase subunit 2 (300 aa).

A disordered region spans residues 281–300; that stretch reads RAIDRDEAGSMEKKKREGYF.

The protein belongs to the PAPS reductase family. CysD subfamily. As to quaternary structure, heterodimer composed of CysD, the smaller subunit, and CysN.

The catalysed reaction is sulfate + ATP + H(+) = adenosine 5'-phosphosulfate + diphosphate. It participates in sulfur metabolism; hydrogen sulfide biosynthesis; sulfite from sulfate: step 1/3. With CysN forms the ATP sulfurylase (ATPS) that catalyzes the adenylation of sulfate producing adenosine 5'-phosphosulfate (APS) and diphosphate, the first enzymatic step in sulfur assimilation pathway. APS synthesis involves the formation of a high-energy phosphoric-sulfuric acid anhydride bond driven by GTP hydrolysis by CysN coupled to ATP hydrolysis by CysD. This is Sulfate adenylyltransferase subunit 2 from Brucella melitensis biotype 2 (strain ATCC 23457).